The following is a 936-amino-acid chain: Phosphoenolpyruvate carboxylase (936 aa).

Active-site residues include histidine 155 and lysine 595.

The protein belongs to the PEPCase type 1 family. As to quaternary structure, homotetramer. It depends on Mg(2+) as a cofactor. Requires Mn(2+) as cofactor.

It carries out the reaction oxaloacetate + phosphate = phosphoenolpyruvate + hydrogencarbonate. Exhibits positive allosteric property with acetyl-CoA and fructose 1,6-bisphosphate, and a negative one with L-aspartate and L-malate. Its function is as follows. Forms oxaloacetate, a four-carbon dicarboxylic acid source for the tricarboxylic acid cycle. The sequence is that of Phosphoenolpyruvate carboxylase (ppc) from Rhodothermus marinus (Rhodothermus obamensis).